The chain runs to 858 residues: MVNFTVDQIRAIMDKKANIRNMSVIAHVDHGKSTLTDSLVCKAGIIASARAGETRFTDTRKDEQERCITIKSTAISLFYELSENDLAFIKQSKDGSGFLINLIDSPGHVDFSSEVTAALRVTDGALVVVDCVSGVCVQTETVLRQAIAERIKPVLMMNKMDRALLELQLDPEELYQTFQRIVENVNVIISTYGEGESGPMGNIMIDPVLGTVGFGSGLHGWAFTLKQFAEMYVAKFAAKGDAQMNPTERAKKVEDMMKKLWGDRYFDPATGKFSKSATGPDGKKLPRTFCQLILDPIFKVFDAIMTFKKEEAAKLIEKLDIKLDSEDKDKEGKPLLKAVMRRWLPAGDALLQMITIHLPSPVTAQKYRCELLYEGPPDDEAAIGIKNCDPRGSLMMYISKMVPTSDKGRFYAFGRVFSGLVSTGLKVRIMGPNYTPGKKEDLYLKPIQRTILMMGRYVEPIEDVPCGNIVGLVGVDQFLVKTGTITTFEHAHNMRVMKFSVSPVVRVAVEAKNPADLPKLVEGLKRLAKSDPMVQCIIEESGEHIIAGAGELHLEICLKDLEEDHACIPIKKSDPVVSYRETVSEESNVMCLSKSPNKHNRLYMKARPFPDGLAEDIDKGEVSARQELKQRARYLAEKYEWDVTEARKIWCFGPDGTGPNILTDITKGVQYLNEIKDSVVAGFQWATKEGVLCEENMRGVRFDVHDVTLHADAIHRGGGQIIPTARRCLYACVLTAQPRLMEPIYLVEIQCPEQVVGGIYGVLNRKRGHVFEESQVAGTPMFVVKAYLPVNESFGFTADLRSNTGGQAFPQCVFDHWQILPGDPFDSASRPSQVVAETRKRKGLKEGIPALDNFLDKL.

The region spanning A17–V362 is the tr-type G domain. GTP is bound at residue A26 to S33. T57 and T59 each carry phosphothreonine. GTP contacts are provided by residues N158–D161 and S216–L218. The residue at position 715 (H715) is a Diphthamide.

This sequence belongs to the TRAFAC class translation factor GTPase superfamily. Classic translation factor GTPase family. EF-G/EF-2 subfamily. In terms of assembly, binds to 80S ribosomes. Actively translating ribosomes show mutually exclusive binding of eIF5a (EIF5A or EIF5A2) and EEF2/eEF2. Interacts with SERBP1; interaction sequesters EEF2/eEF2 at the A-site of the ribosome, thereby blocking the interaction sites of the mRNA-tRNA complex, promoting ribosome stabilization and hibernation. Interacts with HABP4; interaction takes place at the A-site of hibernating ribosomes and promotes ribosome stabilization. In terms of processing, phosphorylation by EF-2 kinase completely inactivates EF-2. Post-translationally, diphthamide is 2-[3-carboxyamido-3-(trimethyl-ammonio)propyl]histidine.

Its subcellular location is the cytoplasm. The protein localises to the nucleus. It carries out the reaction GTP + H2O = GDP + phosphate + H(+). Catalyzes the GTP-dependent ribosomal translocation step during translation elongation. During this step, the ribosome changes from the pre-translocational (PRE) to the post-translocational (POST) state as the newly formed A-site-bound peptidyl-tRNA and P-site-bound deacylated tRNA move to the P and E sites, respectively. Catalyzes the coordinated movement of the two tRNA molecules, the mRNA and conformational changes in the ribosome. The sequence is that of Elongation factor 2 (EEF2) from Gallus gallus (Chicken).